The chain runs to 88 residues: Small ribosomal subunit protein bS16c (88 aa).

Belongs to the bacterial ribosomal protein bS16 family.

The protein localises to the plastid. It localises to the chloroplast. The polypeptide is Small ribosomal subunit protein bS16c (Citrus sinensis (Sweet orange)).